The primary structure comprises 196 residues: Probable GTP-binding protein EngB (196 aa).

Residues 21–195 (DVSEICLIGR…YELINKLLGS (175 aa)) enclose the EngB-type G domain. Residues 29-36 (GRSNVGKS), 56-60 (GKTRL), 75-78 (DAPG), 142-145 (TKLD), and 174-176 (ISN) each bind GTP. Mg(2+) is bound by residues S36 and T58.

The protein belongs to the TRAFAC class TrmE-Era-EngA-EngB-Septin-like GTPase superfamily. EngB GTPase family. Requires Mg(2+) as cofactor.

Necessary for normal cell division and for the maintenance of normal septation. In Mycoplasma capricolum subsp. capricolum (strain California kid / ATCC 27343 / NCTC 10154), this protein is Probable GTP-binding protein EngB.